We begin with the raw amino-acid sequence, 157 residues long: uncharacterized protein (157 aa).

In terms of domain architecture, N-acetyltransferase spans 9–154 (LLINYKTLDE…ETNLNAVTNE (146 aa)).

This is an uncharacterized protein from Bacillus cereus (strain B4264).